The sequence spans 339 residues: Photosystem II assembly lipoprotein Ycf48 (339 aa).

An N-terminal signal peptide occupies residues 1–23; that stretch reads MNRLIKFSFNLILIFVLGLGLSG. A lipid anchor (N-palmitoyl cysteine) is attached at Cys24. Cys24 carries the S-diacylglycerol cysteine lipid modification.

The protein belongs to the Ycf48 family. As to quaternary structure, part of early PSII assembly complexes which includes D1 (psbA) and PsbI; not found in mature PSII. Binds to the lumenal side of PSII complexes. Interacts with YidC.

It is found in the cellular thylakoid membrane. A factor required for optimal assembly of photosystem II (PSII), acting in the early stages of PSII assembly. Also plays a role in replacement of photodamaged D1 (psbA). Assists YidC in synthesis of chlorophyll-binding proteins. This is Photosystem II assembly lipoprotein Ycf48 from Prochlorococcus marinus (strain SARG / CCMP1375 / SS120).